The chain runs to 355 residues: NAD-dependent protein deacylase sirtuin-6 (355 aa).

N-acetylserine is present on Ser-2. Ser-10 bears the Phosphoserine; by MAPK8 mark. One can recognise a Deacetylase sirtuin-type domain in the interval 27-272; it reads PEELERKVWE…TRLMKHLGLE (246 aa). Lys-33 is subject to N6-acetyllysine. NAD(+) is bound by residues Ala-53, Thr-57, Phe-64, Arg-65, Trp-71, Gln-113, and His-133. The Proton acceptor role is filled by His-133. Residues Cys-141, Cys-144, and Cys-166 each coordinate Zn(2+). A Glycyl lysine isopeptide (Lys-Gly) (interchain with G-Cter in ubiquitin) cross-link involves residue Lys-170. Cys-177 contacts Zn(2+). Positions 214, 216, 240, 242, and 258 each coordinate NAD(+). Positions 284–355 are disordered; sequence RALPPLPRPP…KRVKAKAVPS (72 aa). Positions 287 to 296 are enriched in pro residues; sequence PPLPRPPTPK. The residue at position 294 (Thr-294) is a Phosphothreonine. Phosphoserine is present on residues Ser-303 and Ser-330. A compositionally biased stretch (basic residues) spans 343–355; sequence RPPKRVKAKAVPS.

This sequence belongs to the sirtuin family. Class IV subfamily. As to quaternary structure, homodimer; binds to nucleosomes and DNA ends as a homodimer. Interacts with RELA; interferes with RELA binding to target DNA. Interacts with SMARCA5; promoting recruitment of SMARCA5/SNF2H to double-strand breaks (DSBs) sites. Interacts with the mTORC2 complex; preventing the ability of SIRT6 to deacetylate FOXO1. Interacts with the CLOCK-BMAL1 complex; recruited by the CLOCK-BMAL1 complex to regulate expression of clock-controlled genes. Interacts with CSNK2A2; preventing CSNK2A2 localization to the nucleus. (Microbial infection) Interacts with Kaposi's sarcoma-associated herpesvirus protein VIRF-1; this interaction prevents SIRT6 deubiquitination by USP10. Zn(2+) serves as cofactor. In terms of processing, acetylated at Lys-33. Deacetylation at Lys-33 by SIRT1 promotes homomultimerization and binding to double-strand breaks (DSBs) sites. Phosphorylation at Ser-10 by MAPK8/JNK1 in response to oxidative stress stimulates the mono-ADP-ribosyltransferase activity on PARP1, leading to PARP1 recruitment to double-strand breaks (DSBs). Post-translationally, monoubiquitinated at Lys-170 by STUB1/CHIP, preventing its degradation by the proteasome. Deubiquitinated by USP10, also preventing its degradation by the proteasome. In terms of processing, sumoylated, leading to specifically decrease ability to deacetylate histone H3 at 'Lys-56' (H3K56ac).

It is found in the nucleus. The protein localises to the chromosome. The protein resides in the telomere. Its subcellular location is the endoplasmic reticulum. It carries out the reaction N(6)-acetyl-L-lysyl-[protein] + NAD(+) + H2O = 2''-O-acetyl-ADP-D-ribose + nicotinamide + L-lysyl-[protein]. The catalysed reaction is N(6)-tetradecanoyl-L-lysyl-[protein] + NAD(+) + H2O = 2''-O-tetradecanoyl-ADP-D-ribose + nicotinamide + L-lysyl-[protein]. It catalyses the reaction N(6)-hexadecanoyl-L-lysyl-[protein] + NAD(+) + H2O = 2''-O-hexadecanoyl-ADP-D-ribose + nicotinamide + L-lysyl-[protein]. The enzyme catalyses L-lysyl-[protein] + NAD(+) = N(6)-(ADP-D-ribosyl)-L-lysyl-[protein] + nicotinamide + H(+). It carries out the reaction L-arginyl-[protein] + NAD(+) = N(omega)-(ADP-D-ribosyl)-L-arginyl-[protein] + nicotinamide + H(+). With respect to regulation, compared to the defatty-acylase activity, the protein deacetylase activity is weak in vitro, and requires activation. The histone deacetylase activity is strongly activated upon binding to nucleosomes and chromatin in vivo. Two molecules of SIRT6 associate with the acidic patch of one nucleosome, while the C-terminal disordered region of SIRT6 associates with nucleosomal DNA, leading to efficient histone deacetylation. The protein-lysine deacetylase activity is also activated by long-chain free fatty-acids. The histone deacetylase activity is specifically repressed by long non-coding RNA lncPRESS1, which binds to SIRT6 and prevents chromatin-binding, thereby promoting stem cell pluripotency. Due to its essential role as tumor suppressor and involvement in DNA repair and life span, extensive research is made for the identification of small compound regulators of SIRT6. Nitro-fatty acids (nitro-oleic acid and nitro-conjugated linoleic acid) strongly stimulate the protein-lysine deacetylase activity by forming a covalent Michael adduct formation with Cys-18. Activated by UBCS039 (4-(pyridin-3-yl)-4,5- dihydropyrrolo[1,2-a]quinoxaline). Inhibited by non-selective hydroxamate trichostatin A inhibitor. Deacetylase activity is activated by fluvastatin and quercetin-based compounds. The protein-lysine deacetylase activity, but not the defatty-acylase activity, is specifically activated by MDL-800 and MDL-801 activators in vivo, enhancing the histone deacetylase and tumor suppressor activities. MDL-800 and MDL-801 selectively activate SIRT6 and not other members of the sirtuin family. The binding-mode of MDL-801 is however subject to discussion. In terms of biological role, NAD-dependent protein deacetylase, deacylase and mono-ADP-ribosyltransferase that plays an essential role in DNA damage repair, telomere maintenance, metabolic homeostasis, inflammation, tumorigenesis and aging. Displays protein-lysine deacetylase or defatty-acylase (demyristoylase and depalmitoylase) activity, depending on the context. Acts as a key histone deacetylase by catalyzing deacetylation of histone H3 at 'Lys-9', 'Lys-18' and 'Lys-56' (H3K9ac, H3K18ac and H3K56ac, respectively), suppressing target gene expression of several transcription factors, including NF-kappa-B. Acts as an inhibitor of transcription elongation by mediating deacetylation of H3K9ac and H3K56ac, preventing release of NELFE from chromatin and causing transcriptional pausing. Involved in DNA repair by promoting double-strand break (DSB) repair: acts as a DSB sensor by recognizing and binding DSB sites, leading to (1) recruitment of DNA repair proteins, such as SMARCA5/SNF2H, and (2) deacetylation of histone H3K9ac and H3K56ac. SIRT6 participation to DSB repair is probably involved in extension of life span. Also promotes DNA repair by deacetylating non-histone proteins, such as DDB2 and p53/TP53. Specifically deacetylates H3K18ac at pericentric heterochromatin, thereby maintaining pericentric heterochromatin silencing at centromeres and protecting against genomic instability and cellular senescence. Involved in telomere maintenance by catalyzing deacetylation of histone H3 in telomeric chromatin, regulating telomere position effect and telomere movement in response to DNA damage. Required for embryonic stem cell differentiation by mediating histone deacetylation of H3K9ac. Plays a major role in metabolism by regulating processes such as glycolysis, gluconeogenesis, insulin secretion and lipid metabolism. Inhibits glycolysis via histone deacetylase activity and by acting as a corepressor of the transcription factor HIF1A, thereby controlling the expression of multiple glycolytic genes. Has tumor suppressor activity by repressing glycolysis, thereby inhibiting the Warburg effect. Also regulates glycolysis and tumorigenesis by mediating deacetylation and nuclear export of non-histone proteins, such as isoform M2 of PKM (PKM2). Acts as a negative regulator of gluconeogenesis by mediating deacetylation of non-histone proteins, such as FOXO1 and KAT2A/GCN5. Promotes beta-oxidation of fatty acids during fasting by catalyzing deacetylation of NCOA2, inducing coactivation of PPARA. Acts as a regulator of lipid catabolism in brown adipocytes, both by catalyzing deacetylation of histones and non-histone proteins, such as FOXO1. Also acts as a regulator of circadian rhythms, both by regulating expression of clock-controlled genes involved in lipid and carbohydrate metabolism, and by catalyzing deacetylation of PER2. The defatty-acylase activity is specifically involved in regulation of protein secretion. Has high activity toward long-chain fatty acyl groups and mediates protein-lysine demyristoylation and depalmitoylation of target proteins, such as RRAS2 and TNF, thereby regulating their secretion. Also acts as a mono-ADP-ribosyltransferase by mediating mono-ADP-ribosylation of PARP1, TRIM28/KAP1 or SMARCC2/BAF170. Mono-ADP-ribosyltransferase activity is involved in DNA repair, cellular senescence, repression of LINE-1 retrotransposon elements and regulation of transcription. The sequence is that of NAD-dependent protein deacylase sirtuin-6 from Homo sapiens (Human).